A 241-amino-acid chain; its full sequence is Eukaryotic translation initiation factor 3 subunit J (241 aa).

A disordered region spans residues 1-94 (MDVSWDADNF…EKTAEEMTPE (94 aa)). Acidic residues predominate over residues 26–45 (GEDEDDNVKESWEDEEEEKK). Positions 61-118 (KKKIHDKIAERERQEREKAERLVTEKTAEEMTPEQKLAEKLRQQKLQEESDLRLAMET) form a coiled coil. A compositionally biased stretch (basic and acidic residues) spans 66–89 (DKIAERERQEREKAERLVTEKTAE).

It belongs to the eIF-3 subunit J family. In terms of assembly, component of the eukaryotic translation initiation factor 3 (eIF-3) complex.

It localises to the cytoplasm. In terms of biological role, component of the eukaryotic translation initiation factor 3 (eIF-3) complex, which is involved in protein synthesis of a specialized repertoire of mRNAs and, together with other initiation factors, stimulates binding of mRNA and methionyl-tRNAi to the 40S ribosome. The eIF-3 complex specifically targets and initiates translation of a subset of mRNAs involved in cell proliferation. In Bombyx mori (Silk moth), this protein is Eukaryotic translation initiation factor 3 subunit J.